Here is a 715-residue protein sequence, read N- to C-terminus: Formate dehydrogenase H (715 aa).

The 4Fe-4S Mo/W bis-MGD-type domain occupies 1 to 56 (MKKVVTVCPYCASGCKINLVVDNGKIVRAEAAQGKTNQGTLCLKGYYGWDFINDTQ). [4Fe-4S] cluster-binding residues include Cys8, Cys11, Cys15, and Cys42. Lys44 functions as the Electron donor/acceptor in the catalytic mechanism. Mo-bis(molybdopterin guanine dinucleotide)-binding residues include Arg110, Sec140, Asn176, Asp179, Ser180, Cys201, Asp202, Arg204, Gly221, Asn223, Met297, Gln335, Asp404, Thr408, Gln428, Asp429, Ser445, Asp478, Arg581, Glu582, His585, Ser587, Tyr678, and Lys679. Catalysis depends on Sec140, which acts as the Proton donor/acceptor. Residue Sec140 is a non-standard amino acid, selenocysteine.

It belongs to the prokaryotic molybdopterin-containing oxidoreductase family. In terms of assembly, consists of two separable enzymatic activities: a formate dehydrogenase component (FDH-H) and hydrogenase-3. [4Fe-4S] cluster serves as cofactor. Mo-bis(molybdopterin guanine dinucleotide) is required as a cofactor.

It catalyses the reaction formate + A + H(+) = AH2 + CO2. Its activity is regulated as follows. Inhibited by aerobic conditions. Its function is as follows. Decomposes formic acid to hydrogen and carbon dioxide under anaerobic conditions in the absence of exogenous electron acceptors. This chain is Formate dehydrogenase H (fdhF), found in Escherichia coli (strain K12).